The following is a 1006-amino-acid chain: Serine/threonine-protein phosphatase BSL3 (1006 aa).

A disordered region spans residues 1–67 (MDLDSSMVPE…QQQQQPQVTA (67 aa)). Composition is skewed to low complexity over residues 38–47 (SESESASLTP) and 54–67 (QQQQ…QVTA). 5 Kelch repeats span residues 138-184 (TSAG…VATA), 242-290 (YLMA…TASA), 295-345 (LLLL…VFVN), 351-398 (SGGA…DAAG), and 419-465 (LIFI…TPPG). Disordered stretches follow at residues 454 to 494 (AAAA…LGSP) and 552 to 579 (GEVE…IKPD). Ser616 carries the post-translational modification Phosphoserine. The Mn(2+) site is built by Asp709, His711, Asp743, and Asn775. Residue His776 is the Proton donor of the active site. Mn(2+)-binding residues include His828 and His907. The residue at position 964 (Ser964) is a Phosphoserine. Positions 982–1006 (NVNRPPTPTRGRPQNPNDRGSLAWI) are disordered.

Belongs to the PPP phosphatase family. BSU subfamily. Mn(2+) is required as a cofactor. Expressed throughout the plant, with a higher level in younger parts.

It localises to the nucleus. The catalysed reaction is O-phospho-L-seryl-[protein] + H2O = L-seryl-[protein] + phosphate. The enzyme catalyses O-phospho-L-threonyl-[protein] + H2O = L-threonyl-[protein] + phosphate. Its function is as follows. Phosphatase involved in elongation process, probably by acting as a regulator of brassinolide signaling. The sequence is that of Serine/threonine-protein phosphatase BSL3 (BSL3) from Arabidopsis thaliana (Mouse-ear cress).